Consider the following 379-residue polypeptide: Queuine tRNA-ribosyltransferase (379 aa).

Aspartate 94 serves as the catalytic Proton acceptor. Substrate is bound by residues 94–98 (DSGGF), aspartate 148, glutamine 191, and glycine 218. Residues 249 to 255 (GVGSPDA) form an RNA binding region. The active-site Nucleophile is the aspartate 268. Residues 273 to 277 (TRIAR) form an RNA binding; important for wobble base 34 recognition region. Zn(2+) is bound by residues cysteine 306, cysteine 308, cysteine 311, and histidine 337.

It belongs to the queuine tRNA-ribosyltransferase family. In terms of assembly, homodimer. Within each dimer, one monomer is responsible for RNA recognition and catalysis, while the other monomer binds to the replacement base PreQ1. The cofactor is Zn(2+).

It catalyses the reaction 7-aminomethyl-7-carbaguanine + guanosine(34) in tRNA = 7-aminomethyl-7-carbaguanosine(34) in tRNA + guanine. The protein operates within tRNA modification; tRNA-queuosine biosynthesis. Functionally, catalyzes the base-exchange of a guanine (G) residue with the queuine precursor 7-aminomethyl-7-deazaguanine (PreQ1) at position 34 (anticodon wobble position) in tRNAs with GU(N) anticodons (tRNA-Asp, -Asn, -His and -Tyr). Catalysis occurs through a double-displacement mechanism. The nucleophile active site attacks the C1' of nucleotide 34 to detach the guanine base from the RNA, forming a covalent enzyme-RNA intermediate. The proton acceptor active site deprotonates the incoming PreQ1, allowing a nucleophilic attack on the C1' of the ribose to form the product. After dissociation, two additional enzymatic reactions on the tRNA convert PreQ1 to queuine (Q), resulting in the hypermodified nucleoside queuosine (7-(((4,5-cis-dihydroxy-2-cyclopenten-1-yl)amino)methyl)-7-deazaguanosine). This is Queuine tRNA-ribosyltransferase from Staphylococcus aureus (strain Mu3 / ATCC 700698).